The chain runs to 308 residues: D-alanine--D-alanine ligase (308 aa).

In terms of domain architecture, ATP-grasp spans 105 to 302; sequence KAIFKALGLD…FPELCERILD (198 aa). 133–188 lines the ATP pocket; the sequence is DLPFGVPCVVKPAGEGSSVGVQIVKDAARLADACREAARYKGDVVVERYVKGTEVN. Positions 256, 269, and 271 each coordinate Mg(2+).

It belongs to the D-alanine--D-alanine ligase family. Requires Mg(2+) as cofactor. The cofactor is Mn(2+).

The protein localises to the cytoplasm. It catalyses the reaction 2 D-alanine + ATP = D-alanyl-D-alanine + ADP + phosphate + H(+). It participates in cell wall biogenesis; peptidoglycan biosynthesis. Functionally, cell wall formation. In Anaeromyxobacter sp. (strain Fw109-5), this protein is D-alanine--D-alanine ligase.